The sequence spans 164 residues: Protein-export protein SecB (164 aa).

It belongs to the SecB family. As to quaternary structure, homotetramer, a dimer of dimers. One homotetramer interacts with 1 SecA dimer.

The protein localises to the cytoplasm. One of the proteins required for the normal export of preproteins out of the cell cytoplasm. It is a molecular chaperone that binds to a subset of precursor proteins, maintaining them in a translocation-competent state. It also specifically binds to its receptor SecA. The polypeptide is Protein-export protein SecB (Zymomonas mobilis subsp. mobilis (strain ATCC 31821 / ZM4 / CP4)).